A 223-amino-acid polypeptide reads, in one-letter code: Uridylate kinase (223 aa).

9 to 10 (GS) contacts ATP. Gly42 lines the UMP pocket. 2 residues coordinate ATP: Gly43 and Arg47. UMP-binding positions include Asp64 and 112–118 (VSPGQTT). Positions 138, 144, and 147 each coordinate ATP.

The protein belongs to the UMP kinase family. In terms of assembly, homohexamer.

It is found in the cytoplasm. The catalysed reaction is UMP + ATP = UDP + ADP. The protein operates within pyrimidine metabolism; CTP biosynthesis via de novo pathway; UDP from UMP (UMPK route): step 1/1. Inhibited by UTP. Catalyzes the reversible phosphorylation of UMP to UDP. In Methanothrix thermoacetophila (strain DSM 6194 / JCM 14653 / NBRC 101360 / PT) (Methanosaeta thermophila), this protein is Uridylate kinase.